Here is a 532-residue protein sequence, read N- to C-terminus: Muscarinic acetylcholine receptor M5 (532 aa).

At 1 to 29 (MEGDSYHNATTVNGTPVYHQPLERHRLWE) the chain is on the extracellular side. Asparagine 8 carries N-linked (GlcNAc...) asparagine glycosylation. The chain crosses the membrane as a helical span at residues 30 to 53 (VISIAAVTAVVSLITIVGNVLVMI). At 54–66 (SFKVNSQLKTVNN) the chain is on the cytoplasmic side. Residues 67–87 (YYLLSLACADLIIGIFSMNLY) form a helical membrane-spanning segment. At 88-104 (TTYILMGRWALGSLACD) the chain is on the extracellular side. A disulfide bridge connects residues cysteine 103 and cysteine 183. The helical transmembrane segment at 105–126 (LWLALDYVASNASVMNLLVISF) threads the bilayer. Topologically, residues 127–146 (DRYFSITRPLTYRAKRTPKR) are cytoplasmic. Residues 147 to 169 (AGVMIGLAWLISFILWAPAILCW) traverse the membrane as a helical segment. The Extracellular portion of the chain corresponds to 170 to 191 (QYLVGKRTVPLDECQIQFLSEP). Residues 192-214 (TITFGTAIAAFYIPVSVMTILYC) form a helical membrane-spanning segment. The Cytoplasmic segment spans residues 215–443 (RIYRETEKRT…LVKERKAAQT (229 aa)). The disordered stretch occupies residues 262–365 (AQRERNQTSW…SDTPNYFLSP (104 aa)). Residues 269–281 (TSWSSSRRSASTS) are compositionally biased toward low complexity. A compositionally biased stretch (polar residues) spans 282–308 (GKPSQATDPSTNQAKAEQLTTCSSYPS). A helical membrane pass occupies residues 444–464 (LSAILLAFIITWTPYNIMVLV). Topologically, residues 465–478 (STFCDKCVPVTLWH) are extracellular. The chain crosses the membrane as a helical span at residues 479 to 498 (LGYWLCYVNSTVNPICYALC). Topologically, residues 499 to 532 (NRTFRKTFKMLLLCRWKKKKVEEKLYWQGNSKLP) are cytoplasmic. Phosphothreonine is present on residues threonine 501 and threonine 505.

Belongs to the G-protein coupled receptor 1 family. Muscarinic acetylcholine receptor subfamily. CHRM5 sub-subfamily.

The protein resides in the cell membrane. The protein localises to the postsynaptic cell membrane. Its function is as follows. The muscarinic acetylcholine receptor mediates various cellular responses, including inhibition of adenylate cyclase, breakdown of phosphoinositides and modulation of potassium channels through the action of G proteins. Primary transducing effect is Pi turnover. This Macaca mulatta (Rhesus macaque) protein is Muscarinic acetylcholine receptor M5 (CHRM5).